The following is a 114-amino-acid chain: Large ribosomal subunit protein bL20 (114 aa).

This sequence belongs to the bacterial ribosomal protein bL20 family.

Binds directly to 23S ribosomal RNA and is necessary for the in vitro assembly process of the 50S ribosomal subunit. It is not involved in the protein synthesizing functions of that subunit. The sequence is that of Large ribosomal subunit protein bL20 from Flavobacterium johnsoniae (strain ATCC 17061 / DSM 2064 / JCM 8514 / BCRC 14874 / CCUG 350202 / NBRC 14942 / NCIMB 11054 / UW101) (Cytophaga johnsonae).